The chain runs to 287 residues: MAGAKEIRSKIASVQNTQKITKAMEMVAASKMRKSQERMAASRPYAETMRSVIGHLALGNLEYKHPYLEERDVKRVGYLVVSTDRGLCGGLNINLFKRLLAEMKGWSEKGVECDLALIGSKAASFFGSVGGKIVAQVTGMGDNPSLSELIGPVKVMLQAYDEGRLDKLYIVNNKFINTMSQEPRIMQLLPLPPAEDGELKKKSWDYLYEPDPKALLDTLLRRYVESQVYQGVVENLASEQAARMVAMKAATDNGGSLIKELQLVYNKARQASITQELTEIVGGASAV.

The protein belongs to the ATPase gamma chain family. In terms of assembly, F-type ATPases have 2 components, CF(1) - the catalytic core - and CF(0) - the membrane proton channel. CF(1) has five subunits: alpha(3), beta(3), gamma(1), delta(1), epsilon(1). CF(0) has three main subunits: a, b and c.

The protein resides in the cell inner membrane. In terms of biological role, produces ATP from ADP in the presence of a proton gradient across the membrane. The gamma chain is believed to be important in regulating ATPase activity and the flow of protons through the CF(0) complex. This chain is ATP synthase gamma chain, found in Yersinia pestis.